We begin with the raw amino-acid sequence, 92 residues long: Protein S100-A5 (92 aa).

2 EF-hand domains span residues 12–47 and 47–82; these read MVTTFHKYSGREGSKLTLSRKELKELIKKELCLGEM and MKESSIDDLMKSLDKNSDQEIDFKEYSVFLTMLCMA. Ca(2+) contacts are provided by T28, E33, D60, N62, D64, E66, and E71.

The protein belongs to the S-100 family. As to quaternary structure, homodimer.

In terms of biological role, binds calcium, zinc and copper. One subunit can simultaneously bind 2 calcium ions or 2 copper ions plus 1 zinc ion. Calcium and copper ions compete for the same binding sites. This chain is Protein S100-A5 (S100A5), found in Homo sapiens (Human).